Consider the following 367-residue polypeptide: MNKYKNIKRRKSNRIYVGNVPIGDGAPISVQSMTNTQTTNIEETIKQIIKLKKVGVDIVRISVPTLEAAESFKIIKLNVDVPLIADIHFDYRLAIKSIKYGADCLRINPGNIGNKRRILDIVNCAKDKNIPIRIGVNAGSLENDLLKKYKSPIPEALVESAIRHIEYLDSLNFNQFKVSVKTSDVFSAIEANEILAKKTVQPIHIGITESGALRNGIVKSSIGITSLLLSGIGDTLRISLAADPVEEVKVGYDILKTLGIRFRGVNFIACPTCSRQEFNVIDVVNQLEKNLEDLSTPMNVSIIGCIVNGIGEAKVSTLGIVGGSKTSALYKDGIRQKNKLKNQEIIKELEIKIRKKAKSLDKLKKII.

Positions 270, 273, 305, and 312 each coordinate [4Fe-4S] cluster.

This sequence belongs to the IspG family. [4Fe-4S] cluster serves as cofactor.

The enzyme catalyses (2E)-4-hydroxy-3-methylbut-2-enyl diphosphate + oxidized [flavodoxin] + H2O + 2 H(+) = 2-C-methyl-D-erythritol 2,4-cyclic diphosphate + reduced [flavodoxin]. The protein operates within isoprenoid biosynthesis; isopentenyl diphosphate biosynthesis via DXP pathway; isopentenyl diphosphate from 1-deoxy-D-xylulose 5-phosphate: step 5/6. Functionally, converts 2C-methyl-D-erythritol 2,4-cyclodiphosphate (ME-2,4cPP) into 1-hydroxy-2-methyl-2-(E)-butenyl 4-diphosphate. The chain is 4-hydroxy-3-methylbut-2-en-1-yl diphosphate synthase (flavodoxin) from Buchnera aphidicola subsp. Schizaphis graminum (strain Sg).